A 286-amino-acid chain; its full sequence is Orotidine 5'-phosphate decarboxylase (286 aa).

Substrate-binding positions include Asp-35, Lys-57 to His-59, Asp-89 to Thr-98, Tyr-239, and Arg-257. The active-site Proton donor is Lys-91.

Belongs to the OMP decarboxylase family.

It carries out the reaction orotidine 5'-phosphate + H(+) = UMP + CO2. Its pathway is pyrimidine metabolism; UMP biosynthesis via de novo pathway; UMP from orotate: step 2/2. The polypeptide is Orotidine 5'-phosphate decarboxylase (URA3) (Yarrowia lipolytica (strain CLIB 122 / E 150) (Yeast)).